Consider the following 145-residue polypeptide: MLRTMFHAKIHRATVTQADLHYVGSVTVDQDLLDAADILPGELVSIVDVTNGARLETYTIAGERGSGVLGINGAAAHLVHPGDIVILIAYGQMDDDEARHFQPKVVHVDADNRIVELGIDPADGLLDGLSRPPLSREWNEAQAEL.

The active-site Schiff-base intermediate with substrate; via pyruvic acid is serine 25. Serine 25 carries the post-translational modification Pyruvic acid (Ser). Threonine 57 is a binding site for substrate. Tyrosine 58 acts as the Proton donor in catalysis. A substrate-binding site is contributed by 73-75; sequence GAA.

It belongs to the PanD family. As to quaternary structure, heterooctamer of four alpha and four beta subunits. The cofactor is pyruvate. Is synthesized initially as an inactive proenzyme, which is activated by self-cleavage at a specific serine bond to produce a beta-subunit with a hydroxyl group at its C-terminus and an alpha-subunit with a pyruvoyl group at its N-terminus.

The protein localises to the cytoplasm. The catalysed reaction is L-aspartate + H(+) = beta-alanine + CO2. Its pathway is cofactor biosynthesis; (R)-pantothenate biosynthesis; beta-alanine from L-aspartate: step 1/1. Functionally, catalyzes the pyruvoyl-dependent decarboxylation of aspartate to produce beta-alanine. This chain is Aspartate 1-decarboxylase, found in Micrococcus luteus (strain ATCC 4698 / DSM 20030 / JCM 1464 / CCM 169 / CCUG 5858 / IAM 1056 / NBRC 3333 / NCIMB 9278 / NCTC 2665 / VKM Ac-2230) (Micrococcus lysodeikticus).